A 365-amino-acid polypeptide reads, in one-letter code: Flagellar P-ring protein (365 aa).

The signal sequence occupies residues 1–22; that stretch reads MSVRRFLVWILALTVGAAPVMA.

It belongs to the FlgI family. In terms of assembly, the basal body constitutes a major portion of the flagellar organelle and consists of four rings (L,P,S, and M) mounted on a central rod.

The protein localises to the periplasm. Its subcellular location is the bacterial flagellum basal body. Assembles around the rod to form the L-ring and probably protects the motor/basal body from shearing forces during rotation. This is Flagellar P-ring protein from Marinobacter nauticus (strain ATCC 700491 / DSM 11845 / VT8) (Marinobacter aquaeolei).